Here is a 424-residue protein sequence, read N- to C-terminus: Probable ribonuclease FAU-1 (424 aa).

It belongs to the FAU-1 family.

Its function is as follows. Probable RNase involved in rRNA stability through maturation and/or degradation of precursor rRNAs. Binds to RNA in loop regions with AU-rich sequences. The chain is Probable ribonuclease FAU-1 from Saccharolobus solfataricus (strain ATCC 35092 / DSM 1617 / JCM 11322 / P2) (Sulfolobus solfataricus).